A 155-amino-acid polypeptide reads, in one-letter code: 6,7-dimethyl-8-ribityllumazine synthase (155 aa).

5-amino-6-(D-ribitylamino)uracil contacts are provided by residues F23, 57-59, and 81-83; these read AFE and AVI. 86–87 is a (2S)-2-hydroxy-3-oxobutyl phosphate binding site; sequence AT. H89 (proton donor) is an active-site residue. Residue F114 coordinates 5-amino-6-(D-ribitylamino)uracil. R128 provides a ligand contact to (2S)-2-hydroxy-3-oxobutyl phosphate.

This sequence belongs to the DMRL synthase family.

It carries out the reaction (2S)-2-hydroxy-3-oxobutyl phosphate + 5-amino-6-(D-ribitylamino)uracil = 6,7-dimethyl-8-(1-D-ribityl)lumazine + phosphate + 2 H2O + H(+). The protein operates within cofactor biosynthesis; riboflavin biosynthesis; riboflavin from 2-hydroxy-3-oxobutyl phosphate and 5-amino-6-(D-ribitylamino)uracil: step 1/2. Functionally, catalyzes the formation of 6,7-dimethyl-8-ribityllumazine by condensation of 5-amino-6-(D-ribitylamino)uracil with 3,4-dihydroxy-2-butanone 4-phosphate. This is the penultimate step in the biosynthesis of riboflavin. This is 6,7-dimethyl-8-ribityllumazine synthase from Geotalea uraniireducens (strain Rf4) (Geobacter uraniireducens).